The chain runs to 200 residues: Small ribosomal subunit protein mS26 (200 aa).

Residues 1–27 (MLRALNRLAARPETRPPTPLLLPVRGR) constitute a mitochondrion transit peptide. Residues 1–44 (MLRALNRLAARPETRPPTPLLLPVRGRKTRHDPPAKSKVGRVQT) form a disordered region. Lysine 159 bears the N6-acetyllysine mark.

It belongs to the mitochondrion-specific ribosomal protein mS26 family. Component of the mitochondrial ribosome small subunit (28S) which comprises a 12S rRNA and about 30 distinct proteins.

It is found in the mitochondrion. The sequence is that of Small ribosomal subunit protein mS26 (Mrps26) from Mus musculus (Mouse).